A 172-amino-acid polypeptide reads, in one-letter code: Adenine phosphoribosyltransferase (172 aa).

Belongs to the purine/pyrimidine phosphoribosyltransferase family. In terms of assembly, homodimer.

The protein localises to the cytoplasm. It carries out the reaction AMP + diphosphate = 5-phospho-alpha-D-ribose 1-diphosphate + adenine. The protein operates within purine metabolism; AMP biosynthesis via salvage pathway; AMP from adenine: step 1/1. Its function is as follows. Catalyzes a salvage reaction resulting in the formation of AMP, that is energically less costly than de novo synthesis. The protein is Adenine phosphoribosyltransferase of Desulforamulus reducens (strain ATCC BAA-1160 / DSM 100696 / MI-1) (Desulfotomaculum reducens).